The primary structure comprises 245 residues: tRNA (guanine-N(1)-)-methyltransferase (245 aa).

S-adenosyl-L-methionine is bound by residues Gly114 and 133 to 138; that span reads LGDFVI.

This sequence belongs to the RNA methyltransferase TrmD family. In terms of assembly, homodimer.

The protein localises to the cytoplasm. It catalyses the reaction guanosine(37) in tRNA + S-adenosyl-L-methionine = N(1)-methylguanosine(37) in tRNA + S-adenosyl-L-homocysteine + H(+). Functionally, specifically methylates guanosine-37 in various tRNAs. In Pediococcus pentosaceus (strain ATCC 25745 / CCUG 21536 / LMG 10740 / 183-1w), this protein is tRNA (guanine-N(1)-)-methyltransferase.